A 147-amino-acid polypeptide reads, in one-letter code: Large ribosomal subunit protein bL9 (147 aa).

The protein belongs to the bacterial ribosomal protein bL9 family.

Its function is as follows. Binds to the 23S rRNA. In Shouchella clausii (strain KSM-K16) (Alkalihalobacillus clausii), this protein is Large ribosomal subunit protein bL9.